Reading from the N-terminus, the 430-residue chain is Glutamate-1-semialdehyde 2,1-aminomutase (430 aa).

Residue Lys-269 is modified to N6-(pyridoxal phosphate)lysine.

Belongs to the class-III pyridoxal-phosphate-dependent aminotransferase family. HemL subfamily. As to quaternary structure, homodimer. It depends on pyridoxal 5'-phosphate as a cofactor.

The protein localises to the cytoplasm. The catalysed reaction is (S)-4-amino-5-oxopentanoate = 5-aminolevulinate. It participates in porphyrin-containing compound metabolism; protoporphyrin-IX biosynthesis; 5-aminolevulinate from L-glutamyl-tRNA(Glu): step 2/2. The polypeptide is Glutamate-1-semialdehyde 2,1-aminomutase (Desulfitobacterium hafniense (strain DSM 10664 / DCB-2)).